Here is a 173-residue protein sequence, read N- to C-terminus: MPLNIEDKKAVVAEVSAQVAKAQTIVVAEYRGIAVGDLTKLRATARQQGVYLRVLKNTLARRAVEGTPFAGLAEQMTGPLIYGISEDAVASAKVLNDFAKTNDKLVLRAGSYDGKVLDVNAVKALASIPSRDELIAQLLGVMQAPVSGFARLLGALAAKKSEGAPAEAEAPAA.

Belongs to the universal ribosomal protein uL10 family. As to quaternary structure, part of the ribosomal stalk of the 50S ribosomal subunit. The N-terminus interacts with L11 and the large rRNA to form the base of the stalk. The C-terminus forms an elongated spine to which L12 dimers bind in a sequential fashion forming a multimeric L10(L12)X complex.

Its function is as follows. Forms part of the ribosomal stalk, playing a central role in the interaction of the ribosome with GTP-bound translation factors. This is Large ribosomal subunit protein uL10 from Cupriavidus pinatubonensis (strain JMP 134 / LMG 1197) (Cupriavidus necator (strain JMP 134)).